The chain runs to 359 residues: Peptide chain release factor 1 (359 aa).

Gln236 carries the post-translational modification N5-methylglutamine.

This sequence belongs to the prokaryotic/mitochondrial release factor family. Methylated by PrmC. Methylation increases the termination efficiency of RF1.

It is found in the cytoplasm. Its function is as follows. Peptide chain release factor 1 directs the termination of translation in response to the peptide chain termination codons UAG and UAA. This is Peptide chain release factor 1 from Streptococcus pneumoniae (strain Hungary19A-6).